The chain runs to 78 residues: Small ribosomal subunit protein uS17 (78 aa).

It belongs to the universal ribosomal protein uS17 family. Part of the 30S ribosomal subunit.

One of the primary rRNA binding proteins, it binds specifically to the 5'-end of 16S ribosomal RNA. This chain is Small ribosomal subunit protein uS17, found in Agrobacterium fabrum (strain C58 / ATCC 33970) (Agrobacterium tumefaciens (strain C58)).